A 207-amino-acid polypeptide reads, in one-letter code: Ras-related protein Rab-7a (207 aa).

Threonine 2 carries the N-acetylthreonine modification. Residues serine 17, glycine 18, valine 19, glycine 20, lysine 21, threonine 22, serine 23, serine 34, asparagine 35, tyrosine 37, and threonine 40 each coordinate GTP. Threonine 22 contacts Mg(2+). Residues 28–41 (YVNKKFSNQYKATI) carry the Switch 1 motif. Positions 40 and 63 each coordinate Mg(2+). Glycine 66 provides a ligand contact to GTP. The short motif at 67 to 82 (QERFQSLSVAFYRGAD) is the Switch 2 element. Phosphoserine is present on serine 72. GTP is bound by residues asparagine 125, lysine 126, aspartate 128, alanine 156, and lysine 157. Glycyl lysine isopeptide (Lys-Gly) (interchain with G-Cter in ubiquitin) cross-links involve residues lysine 191 and lysine 194. Residues cysteine 205 and cysteine 207 are each lipidated (S-geranylgeranyl cysteine). Cysteine 207 is subject to Cysteine methyl ester.

It belongs to the small GTPase superfamily. Rab family. In terms of assembly, interacts with NTRK1/TRKA. Interacts with RILP. Interacts with PSMA7. Interacts with RNF115. Interacts with FYCO1. Interacts with the PIK3C3/VPS34-PIK3R4 complex. The GTP-bound form interacts with OSBPL1A. The GTP-bound form interacts with RAC1. Interacts with CLN3. Interacts with CHM, the substrate-binding subunit of the Rab geranylgeranyltransferase complex. Interacts with C9orf72. Does not interact with HPS4 and the BLOC-3 complex (heterodimer of HPS1 and HPS4). Interacts with CLN5. Interacts with PLEKHM1 (via N- and C-terminus). Interacts with PRPH; the interaction is direct. Interacts with VPS13A. The GDP-bound form interacts with RIMOC1. Interacts with the MON1A-CCZ1B complex and this interaction is enhanced in the presence of RIMOC1. Interacts with VPS39 and VPS41. Forms a ternary complex with LAMP2 and RUFY4; the interaction with LAMP2 is mediated by RUFY4 (via RUN and coiled coil domains). The cofactor is Mg(2+). Deubiquitination at Lys-191 and Lys-194 by USP32. Post-translationally, phosphorylated at Ser-72 by LRRK1; phosphorylation is dependent on protein kinase C (PKC) activation of LRRK1. In terms of processing, prenylated. Prenylation is required for association with cellular membranes.

The protein resides in the cytoplasmic vesicle. Its subcellular location is the phagosome membrane. It is found in the late endosome membrane. It localises to the lysosome membrane. The protein localises to the melanosome membrane. The protein resides in the autophagosome membrane. Its subcellular location is the lipid droplet. It is found in the endosome membrane. It localises to the mitochondrion membrane. The catalysed reaction is GTP + H2O = GDP + phosphate + H(+). Its activity is regulated as follows. Regulated by guanine nucleotide exchange factors (GEFs) which promote the exchange of bound GDP for free GTP. Regulated by GTPase activating proteins (GAPs) which increase the GTP hydrolysis activity. Inhibited by GDP dissociation inhibitors (GDIs). Its function is as follows. The small GTPases Rab are key regulators of intracellular membrane trafficking, from the formation of transport vesicles to their fusion with membranes. Rabs cycle between an inactive GDP-bound form and an active GTP-bound form that is able to recruit to membranes different sets of downstream effectors directly responsible for vesicle formation, movement, tethering and fusion. In its active state, RAB7A binds to a variety of effector proteins playing a key role in the regulation of endo-lysosomal trafficking. Governs early-to-late endosomal maturation, microtubule minus-end as well as plus-end directed endosomal migration and positioning, and endosome-lysosome transport through different protein-protein interaction cascades. Also plays a central role in growth-factor-mediated cell signaling, nutrient-transporter-mediated nutrient uptake, neurotrophin transport in the axons of neurons and lipid metabolism. Also involved in regulation of some specialized endosomal membrane trafficking, such as maturation of melanosomes, pathogen-induced phagosomes (or vacuoles) and autophagosomes. Plays a role in the maturation and acidification of phagosomes that engulf pathogens, such as S.aureus and Mycobacteria. Plays a role in the fusion of phagosomes with lysosomes. In concert with RAC1, plays a role in regulating the formation of RBs (ruffled borders) in osteoclasts. Controls the endosomal trafficking and neurite outgrowth signaling of NTRK1/TRKA. Regulates the endocytic trafficking of the EGF-EGFR complex by regulating its lysosomal degradation. Involved in the ADRB2-stimulated lipolysis through lipophagy, a cytosolic lipase-independent autophagic pathway. Required for the exosomal release of SDCBP, CD63 and syndecan. Required for vesicular trafficking and cell surface expression of ACE2. May play a role in PRPH neuronal intermediate filament assembly. The sequence is that of Ras-related protein Rab-7a (RAB7A) from Oryctolagus cuniculus (Rabbit).